The primary structure comprises 339 residues: Lipopolysaccharide glucosyltransferase WaaO (339 aa).

Residues 34–39 (GTDKNF) and 131–132 (DA) contribute to the UDP site. Mg(2+) contacts are provided by Asp-131 and Asp-133. Short sequence motifs (DXD) lie at residues 131 to 133 (DAD) and 220 to 222 (DQD). Position 265 (His-265) interacts with Mg(2+). A UDP-binding site is contributed by 265 to 271 (HYIGPTK).

Belongs to the glycosyltransferase 8 family. Mg(2+) is required as a cofactor.

It catalyses the reaction UDP-glucose + lipopolysaccharide = UDP + alpha-D-glucosyl-lipopolysaccharide.. The catalysed reaction is alpha-D-Gal-(1-&gt;6)-alpha-D-Glc-(1-&gt;3)-[L-alpha-D-Hep-(1-&gt;7)]-4-O-PO3(2-)-L-alpha-D-Hep-(1-&gt;3)-4-O-PO3(2-)-L-alpha-D-Hep-(1-&gt;5)-[alpha-Kdo-(2-&gt;4)]-alpha-Kdo-(2-&gt;6)-lipid A + UDP-alpha-D-glucose = alpha-D-Glc-(1-&gt;3)-[alpha-D-Gal-(1-&gt;6)]-alpha-D-Glc-(1-&gt;3)-[L-alpha-D-Hep-(1-&gt;7)]-4-O-PO3(2-)-L-alpha-D-Hep-(1-&gt;3)-4-O-PO3(2-)-L-alpha-D-Hep-(1-&gt;5)-[alpha-Kdo-(2-&gt;4)]-alpha-Kdo-(2-&gt;6)-lipid A + UDP + H(+). It functions in the pathway bacterial outer membrane biogenesis; LPS core biosynthesis. Glucosyltransferase involved in the biosynthesis of the core oligosaccharide region of lipopolysaccharide (LPS). Catalyzes the addition of a second glucose (glucose II) to the first outer-core glucose (glucose I). In vitro, can add multiple glucose residues to its lipid acceptor. Activity does not require the branched galactose added by WaaB, but it is higher in the presence of this branched galactose. In the absence of a lipid acceptor, can hydrolyze UDP-glucose, but not UDP-galactose. This is Lipopolysaccharide glucosyltransferase WaaO from Escherichia coli (strain K12).